Consider the following 292-residue polypeptide: Zinc finger protein SNAI3 (292 aa).

The interval 1 to 20 is SNAG domain; it reads MPRSFLVKTHSSHRVPNYRR. 4 C2H2-type zinc fingers span residues 152-174, 183-205, 209-231, and 237-259; these read FECF…RQLH, FTCK…IRTH, CTCK…VRTH, and YACS…LQTH. The C2H2-type 5; degenerate zinc-finger motif lies at 265 to 287; the sequence is YRCRRCTKTFSRMSLLARHEESG.

This sequence belongs to the snail C2H2-type zinc-finger protein family.

It localises to the nucleus. Functionally, seems to inhibit myoblast differentiation. Transcriptional repressor of E-box-dependent transactivation of downstream myogenic bHLHs genes. Binds preferentially to the canonical E-box sequences 5'-CAGGTG-3' and 5'-CACCTG-3'. The chain is Zinc finger protein SNAI3 (SNAI3) from Homo sapiens (Human).